The primary structure comprises 284 residues: Ribosome-associated protein oga1 (284 aa).

A disordered region spans residues 1 to 284; that stretch reads MSVASKNLFD…LSETDFPALA (284 aa). Positions 22-36 are enriched in basic and acidic residues; sequence TEKKTAASRDKKRSD. A phosphoserine mark is found at Ser37 and Ser51. Composition is skewed to basic and acidic residues over residues 52–73 and 119–141; these read RKRD…ADQP and GREF…ERGW. The residue at position 160 (Thr160) is a Phosphothreonine. Ser162 carries the phosphoserine modification. The residue at position 166 (Thr166) is a Phosphothreonine. Basic and acidic residues-rich tracts occupy residues 172 to 186 and 194 to 209; these read ENVK…ERKS and TVEK…KSAP. Residues 214 to 224 show a composition bias toward low complexity; sequence ASLKKSASQKK. Basic and acidic residues predominate over residues 226-237; that stretch reads AAKESKPKKVLL. The span at 245–254 shows a compositional bias: low complexity; the sequence is ARPARGGRPN. The span at 263–277 shows a compositional bias: polar residues; that stretch reads ETASKTQQAPPTLSE.

It belongs to the STM1 family. In terms of assembly, associates with mature 80S ribosomes. Binds to the head domain of the 40S ribosomal subunit and prevents mRNA binding by inserting its alpha-helix domain towards the mRNA entry tunnel at the decoding site, where it blocks the binding of tRNA and mRNA at the A- and P-sites. Interacts with eEF2; interaction sequesters eEF2 at the A-site of the ribosome, thereby blocking the interaction sites of the mRNA-tRNA complex, promoting ribosome stabilization and hibernation. Interacts with sad1. Phosphorylation by TORC1 upon nutrient replenishment inhibits STM1 and causes its release from dormant ribosomes.

It localises to the cytoplasm. Ribosome preservation factor that protect a small pool of nontranslating, vacant ribosomes in cells under nutrient starvation conditions. Under nutrient-limiting conditions, cells reduce ribosome biogenesis and degrade ribosomes via autophagy (ribophagy) or proteasomal degradation. To avoid excessive degradation during starvation, STM1 binds to and protects 80S ribosomes from proteasomal degradation. Under nutrient-sufficient conditions, TORC1 phosphorylates and inhibits STM1 to prevent formation of dormant 80S ribosomes. Acts as an inhibitor of mRNA translation by promoting ribosome hibernation: clamps the two ribosomal subunits, thereby preventing their dissociation, and inhibits translation by excluding mRNA-binding. Acts via its association with eEF2, promoting ribosome stabilization and storage in an inactive state. May also repress translation by preventing association of eEF3 with ribosomes. Binds specifically G4 quadruplex (these are four-stranded right-handed helices, stabilized by guanine base quartets) and purine motif triplex (characterized by a third, antiparallel purine-rich DNA strand located within the major groove of a homopurine stretch of duplex DNA) nucleic acid structures. These structures may be present at telomeres or in rRNAs. Extends chronological lifespan when overexpressed. The polypeptide is Ribosome-associated protein oga1 (Schizosaccharomyces pombe (strain 972 / ATCC 24843) (Fission yeast)).